The sequence spans 4687 residues: Plectin (4687 aa).

The interval 1–1473 is globular 1; the sequence is MVAGMLMPLD…SELTTLTSQY (1473 aa). At R21 the chain carries Phosphoserine. V26 is modified (phosphotyrosine). A disordered region spans residues 111 to 158; sequence RRRSPHVQTMQGPLGCPPKRGPLPAEDPAREERQVYRRKEREEGAPET. Positions 137–154 are enriched in basic and acidic residues; sequence DPAREERQVYRRKEREEG. The interval 181–406 is actin-binding; the sequence is DERDRVQKKT…YVSSLYDAMP (226 aa). Calponin-homology (CH) domains follow at residues 185 to 288 and 301 to 406; these read RVQK…LHFK and MTAK…DAMP. One copy of the Spectrin 1 repeat lies at 648–722; sequence LQSTQRRPEL…ERARNDESQL (75 aa). S723 carries the phosphoserine modification. 2 Spectrin repeats span residues 743–827 and 840–933; these read KLLN…REDH and LQTQ…AIVQ. Phosphothreonine is present on T818. The region spanning 944-1001 is the SH3 domain; that stretch reads RGHVPLLAVCDYKQVEVTVHKGDQCQLVGPAQPFHWKVLSSSGSEAAVPSVCFLVPPP. Position 1050 is a phosphoserine (S1050). The stretch at 1318 to 1418 is one Spectrin 4 repeat; that stretch reads RERVTQLLER…QKFAKQYINA (101 aa). Phosphoserine is present on S1438. Coiled-coil stretches lie at residues 1472–1692 and 1724–2760; these read QYIK…ERWL and SFAE…TSQA. The central fibrous rod domain stretch occupies residues 1474–2758; the sequence is IKFISETLRR…LAHSEEIATS (1285 aa). Residues 1623-1647 form a disordered region; the sequence is EEAEAQKRQAQEEAERLRRQVQDES. S1724 bears the Phosphoserine mark. Residue K1728 is modified to N6-acetyllysine. Disordered stretches follow at residues 1741-1764, 1796-1846, 2096-2139, 2164-2188, and 2218-2307; these read VTVT…ERAR, SLAQ…GTAQ, EDTM…AEEE, LRER…KRLQ, and RLRS…DAEM. 3 stretches are compositionally biased toward basic and acidic residues: residues 1801–1839, 2096–2111, and 2119–2131; these read DAEK…KQRQ, EDTM…EAAR, and EEQR…ERVQ. Residues 2173–2182 show a composition bias toward low complexity; the sequence is ARQLQLAQEA. A compositionally biased stretch (basic and acidic residues) spans 2218-2261; that stretch reads RLRSEAEAARRAAEEAEEAREQAEREAAQSRKQVEEAERLKQSA. Over residues 2262–2275 the composition is skewed to low complexity; it reads EEQAQAQAQAQAAA. Residues 2276–2291 show a composition bias toward basic and acidic residues; the sequence is EKLRKEAEQEAARRAQ. S2634 is subject to Phosphoserine. K2639 bears the N6-acetyllysine mark. A disordered region spans residues 2671–2710; sequence QEEQQRQQQQMEQEKQELVASMEEARRRQREAEEGVRRKQ. Residues 2682–2710 show a composition bias toward basic and acidic residues; the sequence is EQEKQELVASMEEARRRQREAEEGVRRKQ. Residues 2759-4687 are globular 2; sequence QAAATKALPN…SLGGPESAVA (1929 aa). Phosphoserine is present on S2777. Residue Y2784 is modified to Phosphotyrosine. 6 Plectin repeats span residues 2791–2828, 2829–2866, 2867–2904, 2905–2942, 2943–2980, and 2984–3018; these read QKVP…REDV, RHYL…PGTA, LILL…PELH, HKLL…RDHG, IRLL…EEMN, and ADPS…PETG. S2805 carries the phosphoserine modification. T2889 is modified (phosphothreonine). The residue at position 3036 (Y3036) is a Phosphotyrosine. K3056 and K3094 each carry N6-acetyllysine. Plectin repeat units lie at residues 3119–3156, 3157–3194, 3195–3232, 3233–3270, 3271–3308, and 3311–3346; these read ALVP…ADEV, RQAL…PEVA, VALL…PEMH, EKLL…REQG, LRLL…KETN, and LTSP…QLTG. The residue at position 3365 (Y3365) is a Phosphotyrosine. An N6-acetyllysine modification is found at K3423. Plectin repeat units lie at residues 3488–3525, 3526–3563, 3564–3601, 3602–3639, and 3643–3677; these read RTLL…ASTA, TLLL…PELH, EKLL…RDHA, IRLL…EEMN, and ADPS…PETG. S3583 bears the Phosphoserine mark. Phosphothreonine is present on T3788. A Phosphotyrosine modification is found at Y3793. Plectin repeat units follow at residues 3823 to 3860, 3861 to 3898, 3899 to 3936, 3937 to 3974, and 3978 to 4011; these read WRYL…AEVA, RLLL…PELH, DRLL…AEEA, LRLL…KDTH, and SEPS…DNSG. A Phosphothreonine modification is found at T4033. S4057 is subject to Phosphoserine. Plectin repeat units lie at residues 4066 to 4103, 4104 to 4141, 4142 to 4179, 4180 to 4217, 4221 to 4255, and 4268 to 4308; these read QKFL…PGTA, FELL…PEFK, DKLL…KDHG, IRLL…EEMN, TDPS…PQTG, and RKTS…HQTY. Residues 4253-4303 are binding to intermediate filaments; sequence QTGLCLLPLKEKKRERKTSSKSSVRKRRVVIVDPETGKEMSVYEAYRKGLI. Phosphoserine is present on residues S4385, S4387, S4388, S4389, S4392, S4393, S4394, and S4395. Y4396 carries the post-translational modification Phosphotyrosine. Phosphoserine is present on residues S4399 and S4409. Plectin repeat units lie at residues 4411-4448, 4449-4486, 4487-4524, 4525-4562, and 4563-4600; these read SDPT…NITG, QRLL…KIMV, DRIN…YEAG, QRFL…ARTA, and QKLR…EGTG. T4414 carries the phosphothreonine modification. Residue T4542 is modified to Phosphothreonine; by CDK1. Residues S4610 and S4616 each carry the phosphoserine modification. A compositionally biased stretch (low complexity) spans 4614–4674; it reads YYSPYSVSGS…SGYGRRYASG (61 aa). Residues 4614-4687 form a disordered region; the sequence is YYSPYSVSGS…SLGGPESAVA (74 aa). At Y4618 the chain carries Phosphotyrosine. S4619, S4621, and S4625 each carry phosphoserine. At T4626 the chain carries Phosphothreonine. Residues 4628–4643 are 4 X 4 AA tandem repeats of G-S-R-X; the sequence is GSRTGSRTGSRAGSRR. S4629 is subject to Phosphoserine. Omega-N-methylarginine occurs at positions 4630 and 4643. 2 positions are modified to phosphoserine: S4645 and S4678.

The protein belongs to the plakin or cytolinker family. As to quaternary structure, homodimer or homotetramer. Interacts (via actin-binding domain) with SYNE3. Interacts (via calponin-homology (CH) 1 domain) with VIM (via rod region). Interacts (via N-terminus) with DST isoform 2 (via N-terminus). Interacts with FER. Interacts with TOR1A. Interacts with ANK3. Identified in complexes that contain VIM, EZR, AHNAK, BFSP1, BFSP2, ANK2, PLEC, PRX and spectrin. Post-translationally, phosphorylated by CDK1; regulates dissociation from intermediate filaments during mitosis. Isoform 2 is phosphorylated on Ser-21 and Tyr-26. In terms of tissue distribution, widely expressed with highest expression in skeletal muscle and lowest in thymus.

Its subcellular location is the cytoplasm. It is found in the cytoskeleton. The protein resides in the cell junction. It localises to the hemidesmosome. The protein localises to the cell projection. Its subcellular location is the podosome. Its function is as follows. Interlinks intermediate filaments with microtubules and microfilaments and anchors intermediate filaments to desmosomes or hemidesmosomes. May be involved not only in the cross-linking and stabilization of cytoskeletal intermediate filaments network, but also in the regulation of their dynamics. This is Plectin (Plec) from Rattus norvegicus (Rat).